We begin with the raw amino-acid sequence, 100 residues long: Urease subunit gamma (100 aa).

Belongs to the urease gamma subunit family. Heterotrimer of UreA (gamma), UreB (beta) and UreC (alpha) subunits. Three heterotrimers associate to form the active enzyme.

The protein resides in the cytoplasm. The catalysed reaction is urea + 2 H2O + H(+) = hydrogencarbonate + 2 NH4(+). The protein operates within nitrogen metabolism; urea degradation; CO(2) and NH(3) from urea (urease route): step 1/1. The polypeptide is Urease subunit gamma (Methylobacillus flagellatus (strain ATCC 51484 / DSM 6875 / VKM B-1610 / KT)).